Consider the following 418-residue polypeptide: Protein fuzzy homolog (418 aa).

It belongs to the fuzzy family. In terms of assembly, component of the CPLANE (ciliogenesis and planar polarity effectors) complex, composed of INTU, FUZ and WDPCP. Interacts with CPLANE2. Interacts with CPLANE1.

Its subcellular location is the cytoplasm. It localises to the cytoskeleton. The protein localises to the cilium basal body. Functionally, probable planar cell polarity effector involved in cilium biogenesis. May regulate protein and membrane transport to the cilium. Proposed to function as core component of the CPLANE (ciliogenesis and planar polarity effectors) complex involved in the recruitment of peripheral IFT-A proteins to basal bodies. May regulate the morphogenesis of hair follicles which depends on functional primary cilia. Binds phosphatidylinositol 3-phosphate with highest affinity, followed by phosphatidylinositol 4-phosphate and phosphatidylinositol 5-phosphate. In Homo sapiens (Human), this protein is Protein fuzzy homolog (FUZ).